The chain runs to 431 residues: Venom metalloproteinase 1 (431 aa).

An N-terminal signal peptide occupies residues 1–22; that stretch reads MDLFILTRFILFLSFFMKSIHC. N-linked (GlcNAc...) asparagine glycosylation is found at Asn-64, Asn-113, Asn-148, and Asn-187. Residues 228–428 enclose the Peptidase M12B domain; the sequence is DLLMKTSRRL…TSAACLKDTY (201 aa). 2 cysteine pairs are disulfide-bonded: Cys-340–Cys-423 and Cys-379–Cys-407. His-363 is a binding site for Zn(2+). Glu-364 is a catalytic residue. Zn(2+) contacts are provided by His-367 and His-373. An N-linked (GlcNAc...) asparagine glycan is attached at Asn-414.

The protein in the C-terminal section; belongs to the venom metalloproteinase (M12B) family. As to quaternary structure, monomer. Zn(2+) serves as cofactor. Expressed by the venom gland.

Its subcellular location is the secreted. Its activity is regulated as follows. The gelatinase activity is inhibited by EDTA. Its function is as follows. The recombinant protein has gelatinase activity. In vivo, injection of this recombinant into fifth instar L.oleracea (host) larvae results in partial insect mortality associated with the molt to sixth instar, with surviving insects showing retarded development and growth. The sequence is that of Venom metalloproteinase 1 from Eulophus pennicornis (Parasitoid wasp).